The chain runs to 559 residues: N-acetylglucosamine-6-sulfatase (559 aa).

The interval 1–26 is disordered; sequence MRFLSLAPDRPRRGGPRHLPSGSPAP. The signal sequence occupies residues 1 to 47; the sequence is MRFLSLAPDRPRRGGPRHLPSGSPAPPPPPPLLLLLLLGGCLGVSGA. Ca(2+) contacts are provided by Asp-62, Asp-63, and Cys-98. Cys-98 functions as the Nucleophile in the catalytic mechanism. At Cys-98 the chain carries 3-oxoalanine (Cys). N-linked (GlcNAc...) asparagine glycosylation is found at Asn-118, Asn-124, Asn-190, Asn-205, Asn-217, Asn-286, and Asn-324. The Ca(2+) site is built by Asp-333 and Asn-334. N-linked (GlcNAc...) asparagine glycosylation is found at Asn-369, Asn-394, Asn-412, Asn-429, Asn-456, and Asn-487. Ser-548 is modified (phosphoserine).

It belongs to the sulfatase family. Requires Ca(2+) as cofactor. In terms of processing, processed by internal peptidase. The conversion to 3-oxoalanine (also known as C-formylglycine, FGly), of a serine or cysteine residue in prokaryotes and of a cysteine residue in eukaryotes, is critical for catalytic activity.

The protein localises to the lysosome. It catalyses the reaction Hydrolysis of the 6-sulfate groups of the N-acetyl-D-glucosamine 6-sulfate units of heparan sulfate and keratan sulfate.. In terms of biological role, hydrolyzes 6-sulfate groups in N-acetyl-d-glucosaminide units of heparin sulfate and keratan sulfate. The chain is N-acetylglucosamine-6-sulfatase (GNS) from Capra hircus (Goat).